Here is a 231-residue protein sequence, read N- to C-terminus: Putative carboxymethylenebutenolidase (231 aa).

Catalysis depends on residues Asp169 and His200.

The protein belongs to the dienelactone hydrolase family.

The catalysed reaction is 2-(5-oxo-2,5-dihydrofuran-2-ylidene)acetate + H2O = 4-oxohex-2-enedioate + H(+). This Azospirillum brasilense protein is Putative carboxymethylenebutenolidase.